The following is a 73-amino-acid chain: Antimicrobial peptide lumbricin-PG (73 aa).

An N-terminal signal peptide occupies residues 1-14 (MLLTISDFLFLSLT). The segment at 25–48 (RPWSDRKNNYSGPQFTYPPEKAPP) is disordered.

The protein resides in the secreted. In terms of biological role, displays antimicrobial activity against the Gram-positive bacterium S.aureus ATCC 2592, the Gram-negative bacteria E.coli ATCC 25922 and P.aeruginosa ATCC 27853, and the fungus C.albicans ATCC 2002. Displays stronger activity against P.aeruginosa and S.aureus than E.coli. Displays very weak hemolytic activity. The protein is Antimicrobial peptide lumbricin-PG of Metaphire guillelmi (Earthworm).